The following is a 353-amino-acid chain: Protein MGF 360-13L (353 aa).

It belongs to the asfivirus MGF 360 family.

Its function is as follows. Plays a role in virus cell tropism, and may be required for efficient virus replication in macrophages. The polypeptide is Protein MGF 360-13L (African swine fever virus (isolate Tick/Malawi/Lil 20-1/1983) (ASFV)).